We begin with the raw amino-acid sequence, 389 residues long: Formate-dependent phosphoribosylglycinamide formyltransferase (389 aa).

Residues 15 to 16 (EL) and glutamate 75 each bind N(1)-(5-phospho-beta-D-ribosyl)glycinamide. ATP-binding positions include arginine 107, lysine 148, 153-158 (SSGKGQ), 188-191 (EEFL), and glutamate 196. Positions 112–302 (NLAAGELGLR…EFDLHLRAVL (191 aa)) constitute an ATP-grasp domain. Mg(2+) is bound by residues glutamate 261 and glutamate 273. N(1)-(5-phospho-beta-D-ribosyl)glycinamide contacts are provided by residues aspartate 280, lysine 350, and 357-358 (RR).

Belongs to the PurK/PurT family. As to quaternary structure, homodimer.

It carries out the reaction N(1)-(5-phospho-beta-D-ribosyl)glycinamide + formate + ATP = N(2)-formyl-N(1)-(5-phospho-beta-D-ribosyl)glycinamide + ADP + phosphate + H(+). Its pathway is purine metabolism; IMP biosynthesis via de novo pathway; N(2)-formyl-N(1)-(5-phospho-D-ribosyl)glycinamide from N(1)-(5-phospho-D-ribosyl)glycinamide (formate route): step 1/1. Involved in the de novo purine biosynthesis. Catalyzes the transfer of formate to 5-phospho-ribosyl-glycinamide (GAR), producing 5-phospho-ribosyl-N-formylglycinamide (FGAR). Formate is provided by PurU via hydrolysis of 10-formyl-tetrahydrofolate. The sequence is that of Formate-dependent phosphoribosylglycinamide formyltransferase from Synechococcus sp. (strain CC9311).